Reading from the N-terminus, the 89-residue chain is Signal recognition particle 19 kDa protein (89 aa).

Belongs to the SRP19 family. As to quaternary structure, part of the signal recognition particle protein translocation system, which is composed of SRP and FtsY. Archaeal SRP consists of a 7S RNA molecule of 300 nucleotides and two protein subunits: SRP54 and SRP19.

It is found in the cytoplasm. In terms of biological role, involved in targeting and insertion of nascent membrane proteins into the cytoplasmic membrane. Binds directly to 7S RNA and mediates binding of the 54 kDa subunit of the SRP. The polypeptide is Signal recognition particle 19 kDa protein (Methanococcus maripaludis (strain C5 / ATCC BAA-1333)).